The primary structure comprises 134 residues: Terepressin/terephysin (134 aa).

A signal peptide spans 1–33 (MKCSVLQMSRLSWTACVLLLPLLLLTLQGGVQG). Residues C34 and C39 are joined by a disulfide bond. The propeptide occupies 44–50 (KRAVDSV). 7 cysteine pairs are disulfide-bonded: C56/C100, C59/C73, C67/C90, C74/C80, C107/C121, C115/C133, and C122/C127.

The protein belongs to the vasopressin/oxytocin family. Post-translationally, contains 7 disulfide bonds. As to expression, expressed by the venom duct.

The protein localises to the secreted. In Terebra anilis (Auger snail), this protein is Terepressin/terephysin.